We begin with the raw amino-acid sequence, 614 residues long: Chaperone protein DnaK (614 aa).

Position 175 is a phosphothreonine; by autocatalysis (Thr175). Residues 577-614 form a disordered region; it reads QAGGAEGAADPNAAAGGAQSAPHDDNVVDADFKVDEDK. A compositionally biased stretch (low complexity) spans 583 to 597; it reads GAADPNAAAGGAQSA. Residues 598–614 show a composition bias toward basic and acidic residues; sequence PHDDNVVDADFKVDEDK.

This sequence belongs to the heat shock protein 70 family.

Functionally, acts as a chaperone. The protein is Chaperone protein DnaK of Clostridium beijerinckii (strain ATCC 51743 / NCIMB 8052) (Clostridium acetobutylicum).